A 411-amino-acid chain; its full sequence is Putative binding protein BRA0748/BS1330_II0741 (411 aa).

An N-terminal signal peptide occupies residues 1 to 25; sequence MLIRKWKAGLLAGLSILALASSADA.

The protein belongs to the bacterial solute-binding protein 1 family. In terms of assembly, the complex is composed of two ATP-binding proteins (BRA0745), two transmembrane proteins (BRA0749) and a solute-binding protein (BRA0748).

The protein resides in the periplasm. Probably part of an ABC transporter complex. In Brucella suis biovar 1 (strain 1330), this protein is Putative binding protein BRA0748/BS1330_II0741.